The primary structure comprises 248 residues: UDP-2,3-diacylglucosamine hydrolase (248 aa).

5 residues coordinate Mn(2+): aspartate 7, histidine 9, aspartate 40, asparagine 78, and histidine 113. 78–79 lines the substrate pocket; it reads NR. Residues aspartate 121, serine 159, threonine 163, lysine 166, and histidine 194 each coordinate substrate. Histidine 194 and histidine 196 together coordinate Mn(2+).

This sequence belongs to the LpxH family. The cofactor is Mn(2+).

It localises to the cell inner membrane. It carries out the reaction UDP-2-N,3-O-bis[(3R)-3-hydroxytetradecanoyl]-alpha-D-glucosamine + H2O = 2-N,3-O-bis[(3R)-3-hydroxytetradecanoyl]-alpha-D-glucosaminyl 1-phosphate + UMP + 2 H(+). It functions in the pathway glycolipid biosynthesis; lipid IV(A) biosynthesis; lipid IV(A) from (3R)-3-hydroxytetradecanoyl-[acyl-carrier-protein] and UDP-N-acetyl-alpha-D-glucosamine: step 4/6. Hydrolyzes the pyrophosphate bond of UDP-2,3-diacylglucosamine to yield 2,3-diacylglucosamine 1-phosphate (lipid X) and UMP by catalyzing the attack of water at the alpha-P atom. Involved in the biosynthesis of lipid A, a phosphorylated glycolipid that anchors the lipopolysaccharide to the outer membrane of the cell. In Pseudomonas syringae pv. syringae (strain B728a), this protein is UDP-2,3-diacylglucosamine hydrolase.